Reading from the N-terminus, the 147-residue chain is MAWHRNIKTRGAMVVAAVTLGASGVAAAQSMSTNSASFNAGYGRSSGQESRMVEYSTRDANGNRVVVDGVMLTGSDQSVFSSSRSSGSLDAYSGVGAVGGYAGSTAIGNNLTVITQGNNNTVIVNSSQVNSGNVTAGANVVKGGTPK.

Functionally, involved in attachment of the holdfast to the cell. The holdfast is a structure that allows the bacteria to firmly adheres to surfaces. In Caulobacter vibrioides (strain ATCC 19089 / CIP 103742 / CB 15) (Caulobacter crescentus), this protein is Holdfast attachment protein A (hfaA).